The sequence spans 330 residues: NADH-quinone oxidoreductase subunit H (330 aa).

Helical transmembrane passes span 3–23, 76–96, 118–138, 161–181, 188–208, 244–264, 272–292, and 307–327; these read AAFV…FSAL, PVFM…MAAI, VGLL…LLAG, EVVT…ISLV, AGGM…LFLI, FFIG…LIFL, FIPG…LFLW, and WLCW…TGIV.

It belongs to the complex I subunit 1 family. As to quaternary structure, NDH-1 is composed of 14 different subunits. Subunits NuoA, H, J, K, L, M, N constitute the membrane sector of the complex.

The protein localises to the cell inner membrane. The enzyme catalyses a quinone + NADH + 5 H(+)(in) = a quinol + NAD(+) + 4 H(+)(out). Functionally, NDH-1 shuttles electrons from NADH, via FMN and iron-sulfur (Fe-S) centers, to quinones in the respiratory chain. The immediate electron acceptor for the enzyme in this species is believed to be ubiquinone. Couples the redox reaction to proton translocation (for every two electrons transferred, four hydrogen ions are translocated across the cytoplasmic membrane), and thus conserves the redox energy in a proton gradient. This subunit may bind ubiquinone. This is NADH-quinone oxidoreductase subunit H from Nitratiruptor sp. (strain SB155-2).